The primary structure comprises 520 residues: Solute carrier family 2, facilitated glucose transporter member 14 (520 aa).

Over 1–29 (MEFHNGGHVSGIGGFLVSLTSRMKPHTLA) the chain is Cytoplasmic. The chain crosses the membrane as a helical span at residues 30-50 (VTPALIFAITVATIGSFQFGY). The Extracellular segment spans residues 51-88 (NTGVINAPETIIKEFINKTLTDKANAPPSEVLLTNLWS). N-linked (GlcNAc...) asparagine glycosylation occurs at N67. Residues 89–109 (LSVAIFSVGGMIGSFSVGLFV) traverse the membrane as a helical segment. Topologically, residues 110–117 (NRFGRRNS) are cytoplasmic. A helical membrane pass occupies residues 118-138 (MLIVNLLAATGGCLMGLCKIA). The Extracellular portion of the chain corresponds to 139–148 (ESVEMLILGR). Residues 149-169 (LVIGLFCGLCTGFVPMYIGEI) traverse the membrane as a helical segment. Residues 170–177 (SPTALRGA) are Cytoplasmic-facing. Residues 178 to 198 (FGTLNQLGIVIGILVAQIFGL) traverse the membrane as a helical segment. A D-glucose-binding site is contributed by Q183. Over 199-207 (ELILGSEEL) the chain is Extracellular. Residues 208–228 (WPVLLGFTILPAILQSAALPC) traverse the membrane as a helical segment. Over 229 to 293 (CPESPRFLLI…LFRVSSYRQP (65 aa)) the chain is Cytoplasmic. A helical transmembrane segment spans residues 294–314 (IIISIVLQLSQQLSGINAVFY). Residues 304–305 (QQ) and N310 contribute to the D-glucose site. The Extracellular segment spans residues 315–328 (YSTGIFKDAGVQQP). The chain crosses the membrane as a helical span at residues 329-349 (IYATISAGVVNTIFTLLSLFL). Residue N339 participates in D-glucose binding. Over 350-358 (VERAGRRTL) the chain is Cytoplasmic. A helical membrane pass occupies residues 359–379 (HMIGLGGMAFCSTLMTVSLLL). Residues 380-392 (KNHYNGMSFVCIG) lie on the Extracellular side of the membrane. A helical membrane pass occupies residues 393–413 (AILVFVACFEIGPGPIPWFIV). D-glucose contacts are provided by E402 and W410. Residues 414–423 (AELFSQGPRP) lie on the Cytoplasmic side of the membrane. A helical membrane pass occupies residues 424-444 (AAMAVAGCSNWTSNFLVGLLF). Over 445–451 (PSAAYYL) the chain is Extracellular. A helical membrane pass occupies residues 452 to 472 (GAYVFIIFTGFLITFLAFTFF). The Cytoplasmic segment spans residues 473–520 (KVPETRGRTFEDITRAFEGQAHGADRSGKDGVMGMNSIEPAKETTTNV). Residues 493–520 (AHGADRSGKDGVMGMNSIEPAKETTTNV) form a disordered region.

The protein belongs to the major facilitator superfamily. Sugar transporter (TC 2.A.1.1) family. Glucose transporter subfamily. In terms of tissue distribution, mainly expressed in testis. Also expressed in small intestine, liver and kidney.

The protein resides in the cell membrane. The enzyme catalyses D-glucose(out) = D-glucose(in). It catalyses the reaction L-dehydroascorbate(out) = L-dehydroascorbate(in). Functionally, hexose transporter that can mediate the transport of glucose and dehydroascorbate across the cell membrane. This is Solute carrier family 2, facilitated glucose transporter member 14 from Homo sapiens (Human).